The following is a 714-amino-acid chain: Penicillin-binding protein 1F (714 aa).

The Cytoplasmic portion of the chain corresponds to 1 to 12 (MFKIKKKKLFIP). A helical; Signal-anchor for type II membrane protein membrane pass occupies residues 13–33 (IIILVLTAFLALIGYISIIFL). Over 34–714 (GHYVIDEKKL…DYVQPKLFSS (681 aa)) the chain is Extracellular. The interval 49–217 (SKIVDQNGDE…STYSPILHPD (169 aa)) is transglycosylase. Catalysis depends on glutamate 87, which acts as the Proton donor; for transglycosylase activity. Residues 297 to 592 (SKLQKTAYQV…SSYPTRLFKD (296 aa)) form a transpeptidase region. Serine 359 serves as the catalytic Acyl-ester intermediate; for transpeptidase activity.

In the N-terminal section; belongs to the glycosyltransferase 51 family. This sequence in the C-terminal section; belongs to the transpeptidase family.

It localises to the cell membrane. It catalyses the reaction [GlcNAc-(1-&gt;4)-Mur2Ac(oyl-L-Ala-gamma-D-Glu-L-Lys-D-Ala-D-Ala)](n)-di-trans,octa-cis-undecaprenyl diphosphate + beta-D-GlcNAc-(1-&gt;4)-Mur2Ac(oyl-L-Ala-gamma-D-Glu-L-Lys-D-Ala-D-Ala)-di-trans,octa-cis-undecaprenyl diphosphate = [GlcNAc-(1-&gt;4)-Mur2Ac(oyl-L-Ala-gamma-D-Glu-L-Lys-D-Ala-D-Ala)](n+1)-di-trans,octa-cis-undecaprenyl diphosphate + di-trans,octa-cis-undecaprenyl diphosphate + H(+). The catalysed reaction is Preferential cleavage: (Ac)2-L-Lys-D-Ala-|-D-Ala. Also transpeptidation of peptidyl-alanyl moieties that are N-acyl substituents of D-alanine.. It participates in cell wall biogenesis; peptidoglycan biosynthesis. Cell wall formation. May be involved in outgrowth of the germinated spore or it could function in the synthesis of the germ cell wall. The sequence is that of Penicillin-binding protein 1F (pbpF) from Bacillus subtilis (strain 168).